Consider the following 388-residue polypeptide: Succinate--CoA ligase [ADP-forming] subunit beta (388 aa).

Residues 9 to 244 (KQLFAEFGLP…ASQEDAREAH (236 aa)) enclose the ATP-grasp domain. Residues Lys-46, 53 to 55 (GRG), Glu-99, Ser-102, and Glu-107 each bind ATP. Residues Asn-199 and Asp-213 each coordinate Mg(2+). Substrate contacts are provided by residues Asn-264 and 321–323 (GIV).

This sequence belongs to the succinate/malate CoA ligase beta subunit family. In terms of assembly, heterotetramer of two alpha and two beta subunits. Mg(2+) serves as cofactor.

It carries out the reaction succinate + ATP + CoA = succinyl-CoA + ADP + phosphate. It catalyses the reaction GTP + succinate + CoA = succinyl-CoA + GDP + phosphate. It participates in carbohydrate metabolism; tricarboxylic acid cycle; succinate from succinyl-CoA (ligase route): step 1/1. Functionally, succinyl-CoA synthetase functions in the citric acid cycle (TCA), coupling the hydrolysis of succinyl-CoA to the synthesis of either ATP or GTP and thus represents the only step of substrate-level phosphorylation in the TCA. The beta subunit provides nucleotide specificity of the enzyme and binds the substrate succinate, while the binding sites for coenzyme A and phosphate are found in the alpha subunit. The sequence is that of Succinate--CoA ligase [ADP-forming] subunit beta from Vibrio cholerae serotype O1 (strain ATCC 39541 / Classical Ogawa 395 / O395).